Reading from the N-terminus, the 525-residue chain is Light-independent protochlorophyllide reductase subunit B (525 aa).

Aspartate 36 is a binding site for [4Fe-4S] cluster. The active-site Proton donor is the aspartate 286. 421–422 (GL) serves as a coordination point for substrate.

The protein belongs to the ChlB/BchB/BchZ family. As to quaternary structure, protochlorophyllide reductase is composed of three subunits; ChlL, ChlN and ChlB. Forms a heterotetramer of two ChlB and two ChlN subunits. [4Fe-4S] cluster is required as a cofactor.

It catalyses the reaction chlorophyllide a + oxidized 2[4Fe-4S]-[ferredoxin] + 2 ADP + 2 phosphate = protochlorophyllide a + reduced 2[4Fe-4S]-[ferredoxin] + 2 ATP + 2 H2O. Its pathway is porphyrin-containing compound metabolism; chlorophyll biosynthesis (light-independent). Its function is as follows. Component of the dark-operative protochlorophyllide reductase (DPOR) that uses Mg-ATP and reduced ferredoxin to reduce ring D of protochlorophyllide (Pchlide) to form chlorophyllide a (Chlide). This reaction is light-independent. The NB-protein (ChlN-ChlB) is the catalytic component of the complex. In Prochlorococcus marinus (strain NATL1A), this protein is Light-independent protochlorophyllide reductase subunit B.